Reading from the N-terminus, the 145-residue chain is Peptide methionine sulfoxide reductase MsrB (145 aa).

A MsrB domain is found at Lys4–Tyr127. Catalysis depends on Cys116, which acts as the Nucleophile.

Belongs to the MsrB Met sulfoxide reductase family.

The catalysed reaction is L-methionyl-[protein] + [thioredoxin]-disulfide + H2O = L-methionyl-(R)-S-oxide-[protein] + [thioredoxin]-dithiol. The sequence is that of Peptide methionine sulfoxide reductase MsrB from Streptococcus equi subsp. zooepidemicus (strain H70).